The sequence spans 315 residues: Zinc transport protein ZntB (315 aa).

The Cytoplasmic portion of the chain corresponds to methionine 1–tyrosine 250. A helical transmembrane segment spans residues leucine 251–isoleucine 271. Topologically, residues asparagine 272 to serine 282 are periplasmic. A helical transmembrane segment spans residues methionine 283–phenylalanine 303. Topologically, residues lysine 304–glutamate 315 are cytoplasmic.

This sequence belongs to the CorA metal ion transporter (MIT) (TC 1.A.35) family. In terms of assembly, homopentamer. Can assemble pentamers in the absence of the transmembrane regions.

The protein resides in the cell inner membrane. The enzyme catalyses Zn(2+)(out) + H(+)(out) = Zn(2+)(in) + H(+)(in). Functionally, zinc transporter. Acts as a Zn(2+):proton symporter, which likely mediates zinc ion uptake. This chain is Zinc transport protein ZntB, found in Vibrio parahaemolyticus serotype O3:K6 (strain RIMD 2210633).